Consider the following 345-residue polypeptide: Very-long-chain 3-oxoacyl-CoA reductase (345 aa).

The helical transmembrane segment at Gly26 to Val46 threads the bilayer. Positions 71, 125, 133, 152, 219, 223, 252, and 254 each coordinate NADP(+). Tyr219 serves as the catalytic Proton donor. The active-site Lowers pKa of active site Tyr is the Lys223.

This sequence belongs to the short-chain dehydrogenases/reductases (SDR) family.

It is found in the endoplasmic reticulum membrane. The catalysed reaction is a very-long-chain (3R)-3-hydroxyacyl-CoA + NADP(+) = a very-long-chain 3-oxoacyl-CoA + NADPH + H(+). It functions in the pathway lipid metabolism; fatty acid biosynthesis. Functionally, component of the microsomal membrane bound fatty acid elongation system, which produces the 26-carbon very long-chain fatty acids (VLCFA) from palmitate. Catalyzes the reduction of the 3-ketoacyl-CoA intermediate that is formed in each cycle of fatty acid elongation. VLCFAs serve as precursors for ceramide and sphingolipids. The sequence is that of Very-long-chain 3-oxoacyl-CoA reductase from Aspergillus fumigatus (strain CBS 144.89 / FGSC A1163 / CEA10) (Neosartorya fumigata).